Consider the following 420-residue polypeptide: Septin-8-A (420 aa).

One can recognise a Septin-type G domain in the interval 39–305; that stretch reads QGFCFNILCV…ELYRRCKLEE (267 aa). Positions 49–56 are G1 motif; the sequence is GETGIGKS. GTP-binding positions include 49 to 56, Gly104, 185 to 193, Gly239, and Arg254; these read GETGIGKS and KADTISKSE. The segment at 101-104 is G3 motif; that stretch reads DTVG. The segment at 184–187 is G4 motif; the sequence is AKAD. Residues 321–407 are a coiled coil; sequence QETYEAKRKE…RRKVAAETLS (87 aa). The segment at 393-420 is disordered; the sequence is MNAFNRRKVAAETLSLSQPLKKDKDKKN.

Belongs to the TRAFAC class TrmE-Era-EngA-EngB-Septin-like GTPase superfamily. Septin GTPase family.

The protein is Septin-8-A (sept8a) of Danio rerio (Zebrafish).